We begin with the raw amino-acid sequence, 177 residues long: Large ribosomal subunit protein uL6 (177 aa).

This sequence belongs to the universal ribosomal protein uL6 family. Part of the 50S ribosomal subunit.

Functionally, this protein binds to the 23S rRNA, and is important in its secondary structure. It is located near the subunit interface in the base of the L7/L12 stalk, and near the tRNA binding site of the peptidyltransferase center. This Brucella canis (strain ATCC 23365 / NCTC 10854 / RM-666) protein is Large ribosomal subunit protein uL6.